A 403-amino-acid chain; its full sequence is DNA replication and repair protein RecF (403 aa).

ATP is bound at residue 30-37 (GSNGLGKT).

Belongs to the RecF family.

It localises to the cytoplasm. Functionally, the RecF protein is involved in DNA metabolism; it is required for DNA replication and normal SOS inducibility. RecF binds preferentially to single-stranded, linear DNA. It also seems to bind ATP. The sequence is that of DNA replication and repair protein RecF from Bifidobacterium adolescentis (strain ATCC 15703 / DSM 20083 / NCTC 11814 / E194a).